Consider the following 147-residue polypeptide: NADH-quinone oxidoreductase subunit A (147 aa).

Transmembrane regions (helical) follow at residues 13 to 33 (LFSY…LGAV), 70 to 90 (YLVA…FSWA), and 104 to 124 (VVVF…WGAL).

It belongs to the complex I subunit 3 family. NDH-1 is composed of 14 different subunits. Subunits NuoA, H, J, K, L, M, N constitute the membrane sector of the complex.

The protein resides in the cell inner membrane. It catalyses the reaction a quinone + NADH + 5 H(+)(in) = a quinol + NAD(+) + 4 H(+)(out). NDH-1 shuttles electrons from NADH, via FMN and iron-sulfur (Fe-S) centers, to quinones in the respiratory chain. The immediate electron acceptor for the enzyme in this species is believed to be ubiquinone. Couples the redox reaction to proton translocation (for every two electrons transferred, four hydrogen ions are translocated across the cytoplasmic membrane), and thus conserves the redox energy in a proton gradient. In Gluconacetobacter diazotrophicus (strain ATCC 49037 / DSM 5601 / CCUG 37298 / CIP 103539 / LMG 7603 / PAl5), this protein is NADH-quinone oxidoreductase subunit A.